A 298-amino-acid chain; its full sequence is Homoserine kinase (298 aa).

Residue 83 to 93 (PISRGLGSSSS) participates in ATP binding.

Belongs to the GHMP kinase family. Homoserine kinase subfamily.

The protein localises to the cytoplasm. The enzyme catalyses L-homoserine + ATP = O-phospho-L-homoserine + ADP + H(+). The protein operates within amino-acid biosynthesis; L-threonine biosynthesis; L-threonine from L-aspartate: step 4/5. Functionally, catalyzes the ATP-dependent phosphorylation of L-homoserine to L-homoserine phosphate. The protein is Homoserine kinase of Clostridium botulinum (strain Eklund 17B / Type B).